A 72-amino-acid polypeptide reads, in one-letter code: Translation initiation factor IF-1 (72 aa).

Residues 1–72 form the S1-like domain; sequence MAKEDVIEFS…TKGRITFRYK (72 aa).

The protein belongs to the IF-1 family. In terms of assembly, component of the 30S ribosomal translation pre-initiation complex which assembles on the 30S ribosome in the order IF-2 and IF-3, IF-1 and N-formylmethionyl-tRNA(fMet); mRNA recruitment can occur at any time during PIC assembly.

The protein localises to the cytoplasm. Functionally, one of the essential components for the initiation of protein synthesis. Stabilizes the binding of IF-2 and IF-3 on the 30S subunit to which N-formylmethionyl-tRNA(fMet) subsequently binds. Helps modulate mRNA selection, yielding the 30S pre-initiation complex (PIC). Upon addition of the 50S ribosomal subunit IF-1, IF-2 and IF-3 are released leaving the mature 70S translation initiation complex. The sequence is that of Translation initiation factor IF-1 from Paramagnetospirillum magneticum (strain ATCC 700264 / AMB-1) (Magnetospirillum magneticum).